We begin with the raw amino-acid sequence, 567 residues long: MFS-type transporter poxA (567 aa).

Positions 1 to 23 (MPASDRTSETGDVEKVTAAETPK) are enriched in basic and acidic residues. The interval 1–24 (MPASDRTSETGDVEKVTAAETPKE) is disordered. A run of 10 helical transmembrane segments spans residues 35–55 (ALTGLPLYTVLVGLGLALFLG), 77–97 (ADIGWYGAAYPLTMSSIQLLA), 108–128 (LVFLVFFGLFMLGSLLCGVAV), 141–161 (GAGAAGVLSGTLAIVSAVVPL), 165–185 (SLILGLMMSLVGTAVVLGPVI), 197–217 (WCFYLNLPCGGVTLLALILFF), 240–260 (LAGCLGFIPAVVMLLLALQWG), 271–291 (SATIIGLFCGAGVSLILFLIW), 311–331 (IIASCLYGFALLGGYVVVGYF), and 349–369 (VMLLPNVITNFISKAVIGVIV). N370 is a glycosylation site (N-linked (GlcNAc...) asparagine). The next 4 membrane-spanning stretches (helical) occupy residues 372 to 392 (TGYFNPWLFFGAAVLAIGSGL), 410 to 430 (ILQGAALGIIQAPTLGVQVAL), 436 to 456 (LIPVALSLVIFFQYFGSSIML), and 515 to 535 (AIAGVMWLSTAAALFGFLVSF). The interval 547-567 (EENKKEAAEEEEEVKVAAVEA) is disordered.

The protein belongs to the major facilitator superfamily. TCR/Tet family.

Its subcellular location is the cell membrane. MFS-type transporter; part of the gene cluster that mediates the biosynthesis of oxaleimides, cytotoxic compounds containing an unusual disubstituted succinimide moiety. The chain is MFS-type transporter poxA from Penicillium oxalicum (strain 114-2 / CGMCC 5302) (Penicillium decumbens).